A 992-amino-acid chain; its full sequence is 5'-3' exoribonuclease 2 (992 aa).

Basic and acidic residues predominate over residues 528–549 (NAEELSLKRKSEDVDSAEKETS). Disordered stretches follow at residues 528–568 (NAEE…STVP) and 916–992 (AQQP…EFRR). The span at 550–564 (NEPEDDEADYDEDEG) shows a compositional bias: acidic residues. Composition is skewed to low complexity over residues 928–962 (SQQR…NNGN) and 969–983 (HYNN…YSNS).

The protein belongs to the 5'-3' exonuclease family. XRN2/RAT1 subfamily. As to quaternary structure, interacts with RAI1; the interaction is direct, stabilizes RAT1 protein structure and may stimulate its exoribonuclease activity. The interaction also stimulates RAI1 pyrophosphohydrolase activity, probably by recruiting it to mRNA substrates.

It is found in the nucleus. Possesses 5'-&gt;3' exoribonuclease activity. Required for the processing of nuclear mRNA and rRNA precursors. May promote the termination of transcription by RNA polymerase II. Essential for vegetative cell growth and chromosome segregation. The protein is 5'-3' exoribonuclease 2 (RAT1) of Kluyveromyces lactis (strain ATCC 8585 / CBS 2359 / DSM 70799 / NBRC 1267 / NRRL Y-1140 / WM37) (Yeast).